Consider the following 246-residue polypeptide: Carboxylesterase (246 aa).

S93 acts as the Nucleophile in catalysis. Residues D192 and H222 each act as charge relay system in the active site.

The protein belongs to the lipase/esterase LIP3/BchO family. In terms of assembly, homodimer.

The catalysed reaction is a carboxylic ester + H2O = an alcohol + a carboxylate + H(+). In terms of biological role, involved in the detoxification of xenobiotics. Shows maximal activity with C6 substrates, with gradually decreasing activity from C8 to C12 substrates. No activity for higher chain length substrates acids rather than long-chain ones. In Geobacillus stearothermophilus (Bacillus stearothermophilus), this protein is Carboxylesterase (est).